A 189-amino-acid polypeptide reads, in one-letter code: Peptidyl-tRNA hydrolase (189 aa).

Tyr-14 provides a ligand contact to tRNA. The active-site Proton acceptor is His-19. TRNA is bound by residues Phe-64, Asn-66, and Asn-112.

This sequence belongs to the PTH family. In terms of assembly, monomer.

It is found in the cytoplasm. It carries out the reaction an N-acyl-L-alpha-aminoacyl-tRNA + H2O = an N-acyl-L-amino acid + a tRNA + H(+). Functionally, hydrolyzes ribosome-free peptidyl-tRNAs (with 1 or more amino acids incorporated), which drop off the ribosome during protein synthesis, or as a result of ribosome stalling. Catalyzes the release of premature peptidyl moieties from peptidyl-tRNA molecules trapped in stalled 50S ribosomal subunits, and thus maintains levels of free tRNAs and 50S ribosomes. The chain is Peptidyl-tRNA hydrolase from Erythrobacter litoralis (strain HTCC2594).